Reading from the N-terminus, the 550-residue chain is Epidermal growth factor-like protein 6 (550 aa).

An N-terminal signal peptide occupies residues 1-18; that stretch reads MQPPWGLALPLLLPWVTG. An EGF-like 1 domain is found at 55-90; the sequence is NKGVCEAMCEPRCKFGECVGPNKCRCFPGYTGKTCT. Intrachain disulfides connect cysteine 59–cysteine 72, cysteine 63–cysteine 78, cysteine 80–cysteine 89, cysteine 96–cysteine 107, cysteine 103–cysteine 116, and cysteine 118–cysteine 130. Positions 92-131 constitute an EGF-like 2; calcium-binding domain; it reads DVNECGVKPRPCQHRCVNTHGSYKCFCLSGHMLLPDATCS. One can recognise an EGF-like 3 domain in the interval 135–171; it reads TCARLNCQYGCEDTEEGPRCVCPSSGLRLGPNGRVCL. Residues 172–210 form the EGF-like 4; calcium-binding domain; that stretch reads DIDECASSKAVCPSNRRCVNTFGSYYCKCHIGFELKYIG. Intrachain disulfides connect cysteine 176–cysteine 189, cysteine 183–cysteine 198, cysteine 221–cysteine 234, cysteine 228–cysteine 243, and cysteine 245–cysteine 256. An EGF-like 5; calcium-binding domain is found at 217-257; the sequence is DINECALNTHPCSPHANCLNTRGSFKCKCKQGYRGNGLQCS. Positions 295-354 are disordered; sequence KMVTPRPASTRVPKVNLPYSSEEGVSRGRNYDGEQKKKEEGKRERLEEEKGEKTLRNEVE. Residues 318–354 are compositionally biased toward basic and acidic residues; it reads GVSRGRNYDGEQKKKEEGKRERLEEEKGEKTLRNEVE. A coiled-coil region spans residues 327 to 357; that stretch reads GEQKKKEEGKRERLEEEKGEKTLRNEVEQER. Asparagine 394 carries N-linked (GlcNAc...) asparagine glycosylation. Residues 397–543 form the MAM domain; it reads VDCSFDLGVC…VLLVSGLCPD (147 aa).

It belongs to the nephronectin family. In terms of tissue distribution, expressed at basement membrane of pelage follicles (at protein level).

Its subcellular location is the secreted. It is found in the extracellular space. The protein localises to the extracellular matrix. It localises to the basement membrane. Its function is as follows. May bind integrin alpha-8/beta-1 and play a role in hair follicle morphogenesis. Promotes matrix assembly. In Mus musculus (Mouse), this protein is Epidermal growth factor-like protein 6 (Egfl6).